Consider the following 145-residue polypeptide: D-aminoacyl-tRNA deacylase (145 aa).

The Gly-cisPro motif, important for rejection of L-amino acids motif lies at 137–138; sequence GP.

Belongs to the DTD family. In terms of assembly, homodimer.

The protein resides in the cytoplasm. It catalyses the reaction glycyl-tRNA(Ala) + H2O = tRNA(Ala) + glycine + H(+). The enzyme catalyses a D-aminoacyl-tRNA + H2O = a tRNA + a D-alpha-amino acid + H(+). Its function is as follows. An aminoacyl-tRNA editing enzyme that deacylates mischarged D-aminoacyl-tRNAs. Also deacylates mischarged glycyl-tRNA(Ala), protecting cells against glycine mischarging by AlaRS. Acts via tRNA-based rather than protein-based catalysis; rejects L-amino acids rather than detecting D-amino acids in the active site. By recycling D-aminoacyl-tRNA to D-amino acids and free tRNA molecules, this enzyme counteracts the toxicity associated with the formation of D-aminoacyl-tRNA entities in vivo and helps enforce protein L-homochirality. The protein is D-aminoacyl-tRNA deacylase of Azotobacter vinelandii (strain DJ / ATCC BAA-1303).